We begin with the raw amino-acid sequence, 307 residues long: Protein EI24 homolog (307 aa).

Helical transmembrane passes span 53 to 73 (FIHC…IYLY) and 92 to 112 (MFTI…SIIA). Asparagine 135 carries N-linked (GlcNAc...) asparagine glycosylation. Transmembrane regions (helical) follow at residues 153 to 173 (LFGV…TNFI), 175 to 195 (FVII…ILRG), 225 to 245 (FFFP…LFII), and 260 to 280 (GILP…NVIL).

Belongs to the EI24 family.

The protein localises to the membrane. The sequence is that of Protein EI24 homolog from Dictyostelium discoideum (Social amoeba).